A 368-amino-acid polypeptide reads, in one-letter code: o-succinylbenzoate synthase (368 aa).

The Proton donor role is filled by Lys-183. Positions 213, 239, and 264 each coordinate Mg(2+). Lys-290 serves as the catalytic Proton acceptor.

Belongs to the mandelate racemase/muconate lactonizing enzyme family. MenC type 1 subfamily. As to quaternary structure, monomer. It depends on a divalent metal cation as a cofactor.

The catalysed reaction is (1R,6R)-6-hydroxy-2-succinyl-cyclohexa-2,4-diene-1-carboxylate = 2-succinylbenzoate + H2O. Its pathway is quinol/quinone metabolism; 1,4-dihydroxy-2-naphthoate biosynthesis; 1,4-dihydroxy-2-naphthoate from chorismate: step 4/7. The protein operates within cofactor biosynthesis; phylloquinone biosynthesis. Functionally, converts 2-succinyl-6-hydroxy-2,4-cyclohexadiene-1-carboxylate (SHCHC) to 2-succinylbenzoate (OSB). Does not show N-succinylamino acid racemase (NSAR) activity with N-succinyl-L-phenylglycine as substrate. The sequence is that of o-succinylbenzoate synthase from Desulfotalea psychrophila (strain LSv54 / DSM 12343).